The sequence spans 201 residues: Ciliary microtubule inner protein 2C (201 aa).

Belongs to the CIMIP2 family. In terms of assembly, microtubule inner protein component of sperm flagellar doublet microtubules.

Its subcellular location is the cytoplasm. The protein localises to the cytoskeleton. It is found in the cilium axoneme. It localises to the flagellum axoneme. Functionally, microtubule inner protein (MIP) part of the dynein-decorated doublet microtubules (DMTs) in cilia axoneme, which is required for motile cilia beating. Binds to the intra-tubulin interfaces. This Bos taurus (Bovine) protein is Ciliary microtubule inner protein 2C (CIMIP2C).